Consider the following 414-residue polypeptide: Glyceraldehyde-3-phosphate dehydrogenase, chloroplastic (414 aa).

The N-terminal 76 residues, 1-76 (MAFVAPVATV…GIVAATFGPT (76 aa)), are a transit peptide targeting the chloroplast. NADP(+)-binding positions include 88–89 (RI), aspartate 112, and arginine 156. Residues 230 to 232 (SCT), threonine 261, arginine 276, 289 to 290 (TG), and arginine 312 contribute to the D-glyceraldehyde 3-phosphate site. Cysteine 231 serves as the catalytic Nucleophile. Asparagine 394 lines the NADP(+) pocket.

Belongs to the glyceraldehyde-3-phosphate dehydrogenase family. As to quaternary structure, homotetramer.

The protein localises to the plastid. Its subcellular location is the chloroplast. It carries out the reaction D-glyceraldehyde 3-phosphate + phosphate + NADP(+) = (2R)-3-phospho-glyceroyl phosphate + NADPH + H(+). The protein operates within carbohydrate biosynthesis; Calvin cycle. This Chondrus crispus (Carrageen Irish moss) protein is Glyceraldehyde-3-phosphate dehydrogenase, chloroplastic (GAPA).